Consider the following 317-residue polypeptide: Anamorsin homolog 2 (317 aa).

Positions 1 to 162 (MAKKVGVLLF…KPSWDSASVF (162 aa)) are N-terminal SAM-like domain. Residues 163-229 (QLRKGSSQKG…EDDLLTEEDL (67 aa)) are linker. Positions 240, 247, 250, and 252 each coordinate [2Fe-2S] cluster. The interval 240–252 (CAPTKKACKNCTC) is fe-S binding site A. [4Fe-4S] cluster contacts are provided by cysteine 278, cysteine 281, cysteine 289, and cysteine 292. 2 short sequence motifs (cx2C motif) span residues 278–281 (CGSC) and 289–292 (CAGC). A fe-S binding site B region spans residues 278–292 (CGSCGLGDAFRCAGC).

The protein belongs to the anamorsin family. In terms of assembly, monomer. Requires [2Fe-2S] cluster as cofactor. It depends on [4Fe-4S] cluster as a cofactor.

The protein resides in the cytoplasm. The protein localises to the mitochondrion intermembrane space. Component of the cytosolic iron-sulfur (Fe-S) protein assembly (CIA) machinery. Required for the maturation of extramitochondrial Fe-S proteins. Part of an electron transfer chain functioning in an early step of cytosolic Fe-S biogenesis, facilitating the de novo assembly of a [4Fe-4S] cluster on the cytosolic Fe-S scaffold complex. Electrons are transferred from NADPH via a FAD- and FMN-containing diflavin oxidoreductase. Together with the diflavin oxidoreductase, also required for the assembly of the diferric tyrosyl radical cofactor of ribonucleotide reductase (RNR), probably by providing electrons for reduction during radical cofactor maturation in the catalytic small subunit. In Physcomitrium patens (Spreading-leaved earth moss), this protein is Anamorsin homolog 2.